The chain runs to 388 residues: Galactokinase (388 aa).

Residue 33–36 participates in substrate binding; it reads EHTD. Residues serine 67 and 124 to 130 each bind ATP; that span reads GAGLSSS. Residues serine 130 and glutamate 162 each coordinate Mg(2+). Catalysis depends on aspartate 174, which acts as the Proton acceptor. Tyrosine 224 serves as a coordination point for substrate.

Belongs to the GHMP kinase family. GalK subfamily.

It localises to the cytoplasm. It catalyses the reaction alpha-D-galactose + ATP = alpha-D-galactose 1-phosphate + ADP + H(+). It functions in the pathway carbohydrate metabolism; galactose metabolism. Its function is as follows. Catalyzes the transfer of the gamma-phosphate of ATP to D-galactose to form alpha-D-galactose-1-phosphate (Gal-1-P). The protein is Galactokinase of Lacticaseibacillus casei (strain BL23) (Lactobacillus casei).